A 339-amino-acid chain; its full sequence is Nicotinate-nucleotide--dimethylbenzimidazole phosphoribosyltransferase (339 aa).

Residue E306 is the Proton acceptor of the active site.

The protein belongs to the CobT family.

The catalysed reaction is 5,6-dimethylbenzimidazole + nicotinate beta-D-ribonucleotide = alpha-ribazole 5'-phosphate + nicotinate + H(+). It participates in nucleoside biosynthesis; alpha-ribazole biosynthesis; alpha-ribazole from 5,6-dimethylbenzimidazole: step 1/2. Functionally, catalyzes the synthesis of alpha-ribazole-5'-phosphate from nicotinate mononucleotide (NAMN) and 5,6-dimethylbenzimidazole (DMB). This Brucella melitensis biotype 2 (strain ATCC 23457) protein is Nicotinate-nucleotide--dimethylbenzimidazole phosphoribosyltransferase.